The sequence spans 236 residues: Transcriptional activator protein SolR (236 aa).

The region spanning 169–234 is the HTH luxR-type domain; the sequence is VPESSAALTA…QAVVKAIAIG (66 aa). A DNA-binding region (H-T-H motif) is located at residues 193-212; that stretch reads AYEIGQILRISERTVNFHVN.

Belongs to the autoinducer-regulated transcriptional regulatory protein family.

The polypeptide is Transcriptional activator protein SolR (solR) (Ralstonia nicotianae (strain ATCC BAA-1114 / GMI1000) (Ralstonia solanacearum)).